The sequence spans 86 residues: Cell division topological specificity factor (86 aa).

It belongs to the MinE family.

Functionally, prevents the cell division inhibition by proteins MinC and MinD at internal division sites while permitting inhibition at polar sites. This ensures cell division at the proper site by restricting the formation of a division septum at the midpoint of the long axis of the cell. The protein is Cell division topological specificity factor of Allorhizobium ampelinum (strain ATCC BAA-846 / DSM 112012 / S4) (Agrobacterium vitis (strain S4)).